A 230-amino-acid chain; its full sequence is Orotidine 5'-phosphate decarboxylase (230 aa).

Substrate is bound by residues D10, K32, 59-68 (DLKYHDIPNT), T119, R180, Q189, G209, and R210. Catalysis depends on K61, which acts as the Proton donor.

It belongs to the OMP decarboxylase family. Type 1 subfamily. Homodimer.

It carries out the reaction orotidine 5'-phosphate + H(+) = UMP + CO2. It functions in the pathway pyrimidine metabolism; UMP biosynthesis via de novo pathway; UMP from orotate: step 2/2. Its function is as follows. Catalyzes the decarboxylation of orotidine 5'-monophosphate (OMP) to uridine 5'-monophosphate (UMP). The sequence is that of Orotidine 5'-phosphate decarboxylase from Haemophilus influenzae (strain 86-028NP).